Consider the following 62-residue polypeptide: Double zinc ribbon protein TK0111 (62 aa).

Positions 13, 16, 31, 34, 42, 45, 54, and 57 each coordinate Zn(2+).

In terms of assembly, crystallized in association with 70S ribosomes. Zn(2+) serves as cofactor.

This Thermococcus kodakarensis (strain ATCC BAA-918 / JCM 12380 / KOD1) (Pyrococcus kodakaraensis (strain KOD1)) protein is Double zinc ribbon protein TK0111.